A 188-amino-acid polypeptide reads, in one-letter code: MSDEDFDLDLDDLKRRMDGALASLRTEFASLRTGRASASMLEPVMVDAYGQKTPINQVGTVNVPEPRMVTINVWDKSLVGKVEKAIRESGLGINPQLNGTIIMLPIPELNEERRRELTKVAAQYAEHARVAIRNVRRDGMDQLKKFKADGMSEDDHKIWSDEVQALTDAEIKKVDDALENKQSEIMQV.

It belongs to the RRF family.

It is found in the cytoplasm. In terms of biological role, responsible for the release of ribosomes from messenger RNA at the termination of protein biosynthesis. May increase the efficiency of translation by recycling ribosomes from one round of translation to another. This chain is Ribosome-recycling factor, found in Dinoroseobacter shibae (strain DSM 16493 / NCIMB 14021 / DFL 12).